We begin with the raw amino-acid sequence, 483 residues long: O-acetyltransferase pboB (483 aa).

It belongs to the fumigaclavine B O-acetyltransferase family. Monomer.

Its pathway is secondary metabolite biosynthesis. Its function is as follows. O-acetyltransferase; part of the gene cluster that mediates the biosynthesis of protubonine B, a hydroxylated and diacetylated cyclo-L-Trp-L-Leu derivative. Within the pathway, pboB catalyzes the acetylation of protubonine C at N-1 of the indoline ring to produce protubonine B. The first step of the protubonine B synthesis is performed by the nonribosomal peptide synthetase pboA that catalyzes the formation of cyclo-L-Trp-L-Leu by condensing L-Leu with L-Trp. The flavin-dependent monooxygenase pboD is responsible for hydroxylation at C-3 of the indole ring and subsequent formation of the pyrrolidine ring, leadind to protubonine D. Protubonine D is further diacetylated by two acetyltransferases, pboB and pboC, to form the final product protubonine B via protubonine C. In Aspergillus ustus, this protein is O-acetyltransferase pboB.